We begin with the raw amino-acid sequence, 653 residues long: MRPLRPRAALLALLASLLAAPPVAPAEAPHLVHVDAARALWPLRRFWRSTGFCPPLPHSQADQYVLSWDQQLNLAYVGAVPHRGIKQVRTHWLLELVTTRGSTGRGLSYNFTHLDGYLDLLRENQLLPGFELMGSASGHFTDFEDKQQVFEWKDLVSSLARRYIGRYGLAHVSKWNFETWNEPDHHDFDNVSMTMQGFLNYYDACSEGLRAASPALRLGGPGDSFHTPPRSPLSWGLLRHCHDGTNFFTGEAGVRLDYISLHRKGARSSISILEQEKVVAQQIRQLFPKFADTPIYNDEADPLVGWSLPQPWRADVTYAAMVVKVIAQHQNLLLANTTSAFPYALLSNDNAFLSYHPHPFAQRTLTARFQVNNTRPPHVQLLRKPVLTAMGLLALLDEEQLWAEVSQAGTVLDSNHTVGVLASAHRPQGPADAWRAAVLIYASDDTRAHPNRSVAVTLRLRGVPPGPGLVYVTRYLDNGLCSPDGEWRRLGRPVFPTAEQFRRMRAAEDPVAAAPRPLPAGGRLTLRPALRLPSLLLVHVCARPEKPPGQVTRLRALPLTQGQLVLVWSDEHVGSKCLWTYEIQFSQDGKAYTPVSRKPSTFNLFVFSPDTGAVSGSYRVRALDYWARPGPFSDPVPYLEVPVPRGPPSPGNP.

The N-terminal stretch at 1–27 (MRPLRPRAALLALLASLLAAPPVAPAE) is a signal peptide. Residues proline 54, leucine 56, and histidine 58 each contribute to the alpha-D-mannopyranose site. Histidine 91 serves as a coordination point for alpha-L-iduronate. Residue asparagine 110 is glycosylated (N-linked (GlcNAc...) asparagine). Residues asparagine 181 and glutamate 182 each contribute to the alpha-L-iduronate site. Glutamate 182 (proton donor) is an active-site residue. N-linked (GlcNAc...) asparagine glycosylation occurs at asparagine 190. Alpha-L-iduronate is bound by residues lysine 264, glutamate 299, and glycine 305. Catalysis depends on glutamate 299, which acts as the Nucleophile. Tryptophan 306 is a binding site for alpha-D-mannopyranose. The N-linked (GlcNAc...) asparagine glycan is linked to asparagine 336. 2 residues coordinate alpha-L-iduronate: aspartate 349 and arginine 363. N-linked (GlcNAc...) asparagine glycosylation is found at asparagine 372, asparagine 415, and asparagine 451. 2 residues coordinate alpha-D-mannopyranose: arginine 488 and arginine 492. Residue arginine 492 coordinates beta-D-mannose. Cysteine 541 and cysteine 577 are oxidised to a cystine.

This sequence belongs to the glycosyl hydrolase 39 family. As to quaternary structure, monomer. In terms of processing, N-glycosylation at Asn-372 contributes to substrate binding and is required for full enzymatic activity. Ubiquitous.

It is found in the lysosome. It carries out the reaction Hydrolysis of unsulfated alpha-L-iduronosidic linkages in dermatan sulfate.. The sequence is that of Alpha-L-iduronidase (IDUA) from Homo sapiens (Human).